Consider the following 657-residue polypeptide: Histidine ammonia-lyase (657 aa).

Positions 253-255 form a cross-link, 5-imidazolinone (Ala-Gly); that stretch reads ASG. S254 bears the 2,3-didehydroalanine (Ser) mark. T396 carries the phosphothreonine modification. S635 carries the phosphoserine modification. T637 carries the post-translational modification Phosphothreonine. The residue at position 648 (S648) is a Phosphoserine.

This sequence belongs to the PAL/histidase family. Contains an active site 4-methylidene-imidazol-5-one (MIO), which is formed autocatalytically by cyclization and dehydration of residues Ala-Ser-Gly.

The enzyme catalyses L-histidine = trans-urocanate + NH4(+). It participates in amino-acid degradation; L-histidine degradation into L-glutamate; N-formimidoyl-L-glutamate from L-histidine: step 1/3. The chain is Histidine ammonia-lyase (HAL) from Bos taurus (Bovine).